A 146-amino-acid polypeptide reads, in one-letter code: Spermidine export protein MdtJ (146 aa).

4 consecutive transmembrane segments (helical) span residues 1 to 21 (MIYW…TLSM), 31 to 51 (TGMI…AIAV), 54 to 74 (VALG…ITTF), and 76 to 96 (VLWF…MLIA).

It belongs to the drug/metabolite transporter (DMT) superfamily. Small multidrug resistance (SMR) (TC 2.A.7.1) family. MdtJ subfamily. Forms a complex with MdtI.

It localises to the cell inner membrane. In terms of biological role, catalyzes the excretion of spermidine. The protein is Spermidine export protein MdtJ of Proteus mirabilis (strain HI4320).